Consider the following 213-residue polypeptide: Virulence factor 1 (213 aa).

It is found in the host mitochondrion. In terms of biological role, plays a role in antagonizing the host innate immune response. The polypeptide is Virulence factor 1 (Norovirus (isolate Mouse/NoV/United States/MNV1/2002/GV) (MNV-1)).